Reading from the N-terminus, the 750-residue chain is MTASLVEDTNNNHESVRRIQLDVAGMLCAACASRVETKLNKIPGVRASVNFATRVATIDAVDVAVDELRQVIEQAGYRATAHAESAVEEIDPDADYARNLLRRLIVAALLFVPLADLSTMFAIVPTNRFPGWGYLLTALAAPIVTWAAWPFHRVALRNARYRAASMETLISAGILAATGWSLSTIFVDKEPRQTHGIWQAILHSDSIYFEVAAGVTVFVLAGRFFEARAKSKAGSALRALAARGAKNVEVLLPNGAELTIPAGELKKQQHFLVRPGETITADGVVIDGTATIDMSAITGEARPVHASPASTVVGGTTVLDGRLVIEATAVGGDTQFAAMVRLVEDAQVQKARVQHLADRIAAVFVPMVFVIAGLAGASWLLAGASPDRAFSVVLGVLVIACPCTLGLATPTAMMVASGRGAQLGIFIKGYRALETINAIDTVVFDKTGTLTLGQLSVSTVTSTGGWCSGEVLALASAVEAASEHSVATAIVAAYADPRPVADFVAFAGCGVSGVVAEHHVKIGKPSWVTRNAPCDVVLESARREGESRGETVVFVSVDGVACGAVAIADTVKDSAADAISALCSRGLHTILLTGDNQAAARAVAAQVGIDTVIADMLPEAKVDVIQRLRDQGHTVAMVGDGINDGPALACADLGLAMGRGTDVAIGAADLILVRDSLGVVPVALDLARATMRTIRINMIWAFGYNVAAIPIASSGLLNPLIAGAAMAFSSFFVVSNSLRLSNFGLSQTSD.

The HMA domain occupies 17–80; it reads RRIQLDVAGM…VIEQAGYRAT (64 aa). Positions 28 and 31 each coordinate a metal cation. 6 consecutive transmembrane segments (helical) span residues 104-124, 129-149, 167-187, 200-220, 360-380, and 389-409; these read LIVA…FAIV, FPGW…WAAW, ETLI…TIFV, AILH…VFVL, IAAV…ASWL, and AFSV…GLAT. Catalysis depends on Asp-445, which acts as the 4-aspartylphosphate intermediate. 6 consecutive transmembrane segments (helical) span residues 471 to 491, 500 to 520, 547 to 567, 663 to 683, 693 to 713, and 715 to 735; these read VLAL…TAIV, VADF…EHHV, SRGE…AVAI, VAIG…VPVA, TIRI…PIAS, and GLLN…FVVS.

It belongs to the cation transport ATPase (P-type) (TC 3.A.3) family. Type IB subfamily.

Its subcellular location is the cell membrane. The catalysed reaction is ATP + H2O = ADP + phosphate + H(+). The polypeptide is Cation-transporting P-type ATPase B (ctpB) (Mycobacterium leprae (strain TN)).